The chain runs to 199 residues: Prolactin (199 aa).

An intrachain disulfide couples cysteine 4 to cysteine 11. Phosphoserine is present on residues serine 26, serine 34, and serine 90. 2 cysteine pairs are disulfide-bonded: cysteine 58–cysteine 174 and cysteine 191–cysteine 199.

The protein belongs to the somatotropin/prolactin family. In terms of assembly, interacts with PRLR.

It localises to the secreted. Prolactin acts primarily on the mammary gland by promoting lactation. This is Prolactin (PRL) from Loxodonta africana (African elephant).